An 831-amino-acid polypeptide reads, in one-letter code: AdoMet-dependent rRNA methyltransferase SPB1 (831 aa).

S-adenosyl-L-methionine-binding residues include Gly58, Trp60, Asp78, Asp94, and Asp119. The active-site Proton acceptor is Lys159. 2 coiled-coil regions span residues 346 to 389 and 440 to 479; these read LTED…QMNM and NDIN…ERDA. Disordered regions lie at residues 492–535 and 565–645; these read DEGW…ADQR and MNKK…DQQS. Basic and acidic residues predominate over residues 499–510; sequence ESDKEGSDKETE. Composition is skewed to acidic residues over residues 511–526, 594–611, and 618–631; these read ANDY…DDDE, MEVD…DSDF, and PDEE…DNEN. Residues 632 to 645 show a composition bias toward basic and acidic residues; the sequence is DVSRKYSKAKDQQS. Positions 729-782 form a coiled coil; the sequence is LEAQGRKKLRALKRLEKLKKKSDMINEDSAKSERDKADEIQKLMKKLTKKQKTK.

The protein belongs to the class I-like SAM-binding methyltransferase superfamily. RNA methyltransferase RlmE family. SPB1 subfamily. As to quaternary structure, component of the nucleolar and nucleoplasmic pre-60S ribosomal particle.

Its subcellular location is the nucleus. It localises to the nucleolus. The catalysed reaction is a ribonucleotide in rRNA + S-adenosyl-L-methionine = a 2'-O-methylribonucleotide in rRNA + S-adenosyl-L-homocysteine + H(+). Functionally, required for proper assembly of pre-ribosomal particles during the biogenesis of the 60S ribosomal subunit. This chain is AdoMet-dependent rRNA methyltransferase SPB1, found in Debaryomyces hansenii (strain ATCC 36239 / CBS 767 / BCRC 21394 / JCM 1990 / NBRC 0083 / IGC 2968) (Yeast).